A 683-amino-acid polypeptide reads, in one-letter code: Amphiphysin (683 aa).

Coiled-coil stretches lie at residues 10–83 and 144–191; these read AKNV…SLHE and DYDS…QEEL. Residues 24–240 form the BAR domain; the sequence is VLQKLGKADE…MTKLGDQHAD (217 aa). 3 disordered regions span residues 244–311, 421–443, and 455–599; these read SIQG…KVTP, AETEQALPTEPQAEEPPTTAAAP, and EPKE…ASLS. Ser-252 carries the phosphoserine modification. Thr-260 bears the Phosphothreonine mark. A compositionally biased stretch (pro residues) spans 261 to 274; sequence PSPPEEASPLPSPT. 4 positions are modified to phosphoserine: Ser-262, Ser-268, Ser-272, and Ser-276. Residue Thr-280 is modified to Phosphothreonine. 2 stretches are compositionally biased toward low complexity: residues 424 to 443 and 468 to 477; these read EQALPTEPQAEEPPTTAAAP and AGETVGTEGS. Ser-496 is modified (phosphoserine). Residues 539-559 are compositionally biased toward basic and acidic residues; that stretch reads SNHEGEEHQETTTGTETREAT. Residues 585 to 596 are compositionally biased toward low complexity; it reads AATPAPAGAVDA. Residues 610-683 form the SH3 domain; the sequence is GFLYKVETLH…FPENFTRHLE (74 aa). Residue Ser-626 is modified to Phosphoserine.

In terms of assembly, heterodimer with BIN1. Binds SH3GLB1. Interacts with REPS1 and SGIP1. Binds AP2A2. Interacts with AP2B1. Interacts with DNM1 and SYNJ1.

It is found in the cytoplasmic vesicle. The protein localises to the secretory vesicle. Its subcellular location is the synaptic vesicle membrane. It localises to the cytoplasm. The protein resides in the cytoskeleton. In terms of biological role, may participate in mechanisms of regulated exocytosis in synapses and certain endocrine cell types. May control the properties of the membrane associated cytoskeleton. The polypeptide is Amphiphysin (Amph) (Rattus norvegicus (Rat)).